Reading from the N-terminus, the 232-residue chain is Protein FAM228B (232 aa).

The protein belongs to the FAM228 family.

This chain is Protein FAM228B (Fam228b), found in Mus musculus (Mouse).